A 306-amino-acid chain; its full sequence is HORMA domain-containing protein 2 (306 aa).

The region spanning 29–232 is the HORMA domain; sequence HESLIMVKKL…TGFHSMKVKV (204 aa).

As to quaternary structure, interacts with HORMAD1. In terms of processing, phosphorylated in a SPO11-dependent manner.

It localises to the nucleus. The protein localises to the chromosome. Its function is as follows. Essential for synapsis surveillance during meiotic prophase via the recruitment of ATR activity. Plays a key role in the male mid-pachytene checkpoint and the female meiotic prophase checkpoint: required for efficient build-up of ATR activity on unsynapsed chromosome regions, a process believed to form the basis of meiotic silencing of unsynapsed chromatin (MSUC) and meiotic prophase quality control in both sexes. Required for the DNA double-strand break-independent, BRCA1-dependent activation of ATR on the sex chromosomes that is essential for normal sex body formation. This chain is HORMA domain-containing protein 2 (HORMAD2), found in Bos taurus (Bovine).